We begin with the raw amino-acid sequence, 399 residues long: MTYNKRLFTSESVTEGHPDKIADQVSDAILDEILKDDPNARVACETTVTTGMALISGEISTTTYVDIPKVVRETIKDIGYTRAKYGYDSQTMAVLTAIDEQSPDIAQGVDKALEYRNDISEEEIEATGAGDQGLMFGYATDETDTYMPLPIFLSHQLAKRLADVRKDEILDYLRPDGKVQVTVEYGEDDKPRRIDTIVVSTQHAEDVELAQIEKDIKTHVIYPTVDKALLDDETKFYINPTGRFVIGGPQGDAGLTGRKIIVDTYGGYARHGGGCFSGKDPTKVDRSAAYAARYVAKNIVAAGLAKQCEVQLAYAIGVAEPVSISINTFDTGKVSEARLVEAVRKHFDLRPAGIIKMLDLKQPIYRQTAAYGHFGRTDVLLPWEKLDKVNVLKDAVEIQ.

Residue His-17 participates in ATP binding. Asp-19 contributes to the Mg(2+) binding site. Glu-45 is a K(+) binding site. Positions 58 and 101 each coordinate L-methionine. A flexible loop region spans residues 101 to 111 (QSPDIAQGVDK). Residues 176–178 (DGK), 243–244 (RF), Asp-252, 258–259 (RK), and Lys-279 each bind ATP. Asp-252 serves as a coordination point for L-methionine. Position 283 (Lys-283) interacts with L-methionine.

It belongs to the AdoMet synthase family. Homotetramer; dimer of dimers. Mg(2+) is required as a cofactor. It depends on K(+) as a cofactor.

It localises to the cytoplasm. It carries out the reaction L-methionine + ATP + H2O = S-adenosyl-L-methionine + phosphate + diphosphate. It functions in the pathway amino-acid biosynthesis; S-adenosyl-L-methionine biosynthesis; S-adenosyl-L-methionine from L-methionine: step 1/1. Functionally, catalyzes the formation of S-adenosylmethionine (AdoMet) from methionine and ATP. The overall synthetic reaction is composed of two sequential steps, AdoMet formation and the subsequent tripolyphosphate hydrolysis which occurs prior to release of AdoMet from the enzyme. This chain is S-adenosylmethionine synthase, found in Staphylococcus epidermidis (strain ATCC 35984 / DSM 28319 / BCRC 17069 / CCUG 31568 / BM 3577 / RP62A).